The sequence spans 185 residues: HTH-type transcriptional regulator PuuR (185 aa).

A disordered region spans residues 1 to 20 (MSDEGLAPGKRLSEIRQQQG). The 55-residue stretch at 12-66 (LSEIRQQQGLSQRRAAELSGLTHSAISTIEQDKVSPAISTLQKLLKVYGLSLSEF) folds into the HTH cro/C1-type domain. Positions 23 to 42 (QRRAAELSGLTHSAISTIEQ) form a DNA-binding region, H-T-H motif. The region spanning 111 to 178 (FETYQPGTTT…TSAGICRIIS (68 aa)) is the Cupin type-2 domain.

It participates in amine and polyamine degradation; putrescine degradation [regulation]. Represses puuA, puuD and puuP. This is HTH-type transcriptional regulator PuuR (puuR) from Escherichia coli (strain K12).